Here is a 165-residue protein sequence, read N- to C-terminus: Ribosomal RNA large subunit methyltransferase H (165 aa).

Gly-109 provides a ligand contact to S-adenosyl-L-methionine.

It belongs to the RNA methyltransferase RlmH family. Homodimer.

The protein resides in the cytoplasm. It catalyses the reaction pseudouridine(1915) in 23S rRNA + S-adenosyl-L-methionine = N(3)-methylpseudouridine(1915) in 23S rRNA + S-adenosyl-L-homocysteine + H(+). Specifically methylates the pseudouridine at position 1915 (m3Psi1915) in 23S rRNA. This chain is Ribosomal RNA large subunit methyltransferase H, found in Methylorubrum extorquens (strain CM4 / NCIMB 13688) (Methylobacterium extorquens).